We begin with the raw amino-acid sequence, 567 residues long: Urease subunit alpha (567 aa).

Positions 129–567 constitute a Urease domain; it reads GGIDTHIHFI…LPMAQRYFLF (439 aa). Ni(2+) is bound by residues His134, His136, and Lys217. Residue Lys217 is modified to N6-carboxylysine. His219 contacts substrate. Ni(2+)-binding residues include His246 and His272. Catalysis depends on His320, which acts as the Proton donor. Asp360 is a binding site for Ni(2+).

The protein belongs to the metallo-dependent hydrolases superfamily. Urease alpha subunit family. Probable heterotrimer of UreA (gamma), UreB (beta) and UreC (alpha) subunits. Three heterotrimers associate to form the active enzyme. The trimeric urease interacts with an accessory complex composed of UreD, UreF and UreG, which is required for the assembly of the nickel containing metallocenter of UreC. The UreE protein may also play a direct role in nickel transfer to the urease apoprotein. It depends on Ni cation as a cofactor. Post-translationally, carboxylation allows a single lysine to coordinate two nickel ions.

It is found in the cytoplasm. It carries out the reaction urea + 2 H2O + H(+) = hydrogencarbonate + 2 NH4(+). The protein operates within nitrogen metabolism; urea degradation; CO(2) and NH(3) from urea (urease route): step 1/1. The sequence is that of Urease subunit alpha from Proteus mirabilis (strain HI4320).